A 1098-amino-acid polypeptide reads, in one-letter code: NACHT, LRR and PYD domains-containing protein 5 (1098 aa).

Positions 1–97 (MREAKIAPLS…SEMARDEMKK (97 aa)) constitute a Pyrin domain. The segment at 104–131 (SEDSAPTKTDQGPSMKEVPGPREDPQDS) is disordered. Positions 122–131 (PGPREDPQDS) are enriched in basic and acidic residues. The NACHT domain occupies 180-503 (LTVVLHGPPG…ALFYVLRGVE (324 aa)). Position 186 to 193 (186 to 193 (GPPGVGKS)) interacts with ATP. LRR repeat units follow at residues 851–871 (GLTHLSLSGDELGSKGMSLLC), 880–900 (GLQKLALNACSLDVAGCGFLA), 908–928 (HLTHLSLSMNPLEDPGMNLLC), 937–958 (PLRDLDLVNCRLTASCCKSLSN), 965–985 (RLRSLDLAANALGDEGIAALC), 993–1013 (TLTRLGLEACGLTSEGCKALS), and 1021–1041 (HLASLNLMRNDLGPRGMTTLC).

The protein belongs to the NLRP family. As to quaternary structure, component of the subcortical maternal complex (SCMC), at least composed of NLRP5, KHDC3, OOEP, and TLE6. Within the complex, interacts with OOEP, KHDC3 and TLE6. The SCMC may facilitate translocation of its components between the nuclear and cytoplasmic compartments. As part of the SCMC interacts with the SCMC-associated protein ZBED3. As part of the SCMC interacts with the SCMC-associated protein CFL1/Cofilin-1. Interacts with PRKCE. Interacts with TUBB3 at cytoskeleton microtubules. Phosphorylated by PRKCE. Oocyte-specific.

It localises to the cytoplasm. The protein resides in the cytoplasmic vesicle. Its subcellular location is the secretory vesicle. It is found in the cortical granule. The protein localises to the mitochondrion. It localises to the nucleus. The protein resides in the nucleolus. Its subcellular location is the golgi apparatus. Component of the subcortical maternal complex (SCMC), a multiprotein complex that plays a key role in early embryonic development. The SCMC complex is a structural constituent of cytoplasmic lattices, which consist in fibrous structures found in the cytoplasm of oocytes and preimplantation embryos. They are required to store maternal proteins critical for embryonic development, such as proteins that control epigenetic reprogramming of the preimplantation embryo, and prevent their degradation or activation. Required for the localization of cortical granules to the cortex of oocytes, via association with the cortical actin scaffold. Required for cortical actin clearance prior to oocyte exocytosis and prevention of polyspermy. Involved in regulating post-fertilization Ca(2+) release and endoplasmic reticulum storage (ER) storage via regulation of cellular localization. May be involved in the localization of mitochondria to the cytoplasm and perinuclear region in oocytes and early stage embryos, independent of its role in CPL formation. This Bos taurus (Bovine) protein is NACHT, LRR and PYD domains-containing protein 5 (NLRP5).